We begin with the raw amino-acid sequence, 106 residues long: Small ribosomal subunit protein uS10 (106 aa).

The protein belongs to the universal ribosomal protein uS10 family. In terms of assembly, part of the 30S ribosomal subunit.

Its function is as follows. Involved in the binding of tRNA to the ribosomes. The protein is Small ribosomal subunit protein uS10 of Synechococcus sp. (strain RCC307).